The primary structure comprises 796 residues: Inactive dipeptidyl peptidase 10 (796 aa).

The Cytoplasmic segment spans residues 1-34 (MNQTASVSHHIKCQPSKTIKELGSNSPPQRNWKG). The interval 1–56 (MNQTASVSHHIKCQPSKTIKELGSNSPPQRNWKGIAIALLVILVVCSLITMSVILL) is mediates effects on KCND2. Residues 35-55 (IAIALLVILVVCSLITMSVIL) traverse the membrane as a helical; Signal-anchor for type II membrane protein segment. Topologically, residues 56 to 796 (LTPDELTNSS…VLPQEPEEDE (741 aa)) are extracellular. Residues N90, N111, and N119 are each glycosylated (N-linked (GlcNAc...) asparagine). A phosphotyrosine mark is found at Y138 and Y143. N-linked (GlcNAc...) asparagine glycosylation is found at N257, N342, and N748.

It belongs to the peptidase S9B family. DPPIV subfamily. May form oligomers. Interacts with KCND1. Interacts with KCND2. Post-translationally, N-glycosylation is important for cell surface expression, specially at Asn-257, which is crucial. In terms of tissue distribution, found in serum, T-cells and brain (at protein level). Expressed in brain, pancreas, spinal cord and adrenal glands.

It is found in the cell membrane. Promotes cell surface expression of the potassium channel KCND2. Modulates the activity and gating characteristics of the potassium channel KCND2. Has no dipeptidyl aminopeptidase activity. This Homo sapiens (Human) protein is Inactive dipeptidyl peptidase 10 (DPP10).